Consider the following 373-residue polypeptide: Capsular polysaccharide phosphotransferase (373 aa).

It belongs to the stealth family.

Part of a capsule gene locus. Expression was not detected under standard growth conditions. This chain is Capsular polysaccharide phosphotransferase, found in Neisseria meningitidis serogroup B.